The sequence spans 527 residues: Probable bifunctional tRNA threonylcarbamoyladenosine biosynthesis protein (527 aa).

The kae1 stretch occupies residues 1–324 (MIVLGLEGTA…YRIDEVDAPW (324 aa)). Residues His-107, His-111, and Tyr-128 each coordinate Fe cation. L-threonylcarbamoyladenylate contacts are provided by residues 128–132 (YVSGG), Asp-160, Gly-173, Glu-177, and Asn-257. Asp-285 is a binding site for Fe cation. Residues 330 to 527 (VKYRDAGAES…EDIRRRHRYV (198 aa)) form the Protein kinase domain. ATP is bound by residues 333–341 (RDAGAESRI) and Lys-354. Residue Asp-445 is the Proton acceptor; for kinase activity of the active site.

This sequence in the N-terminal section; belongs to the KAE1 / TsaD family. It in the C-terminal section; belongs to the protein kinase superfamily. Tyr protein kinase family. BUD32 subfamily. In terms of assembly, component of the KEOPS complex that consists of Kae1, Bud32, Cgi121 and Pcc1; the whole complex dimerizes. The cofactor is Fe(2+).

The protein localises to the cytoplasm. It carries out the reaction L-seryl-[protein] + ATP = O-phospho-L-seryl-[protein] + ADP + H(+). The enzyme catalyses L-threonyl-[protein] + ATP = O-phospho-L-threonyl-[protein] + ADP + H(+). It catalyses the reaction L-threonylcarbamoyladenylate + adenosine(37) in tRNA = N(6)-L-threonylcarbamoyladenosine(37) in tRNA + AMP + H(+). Required for the formation of a threonylcarbamoyl group on adenosine at position 37 (t(6)A37) in tRNAs that read codons beginning with adenine. Is a component of the KEOPS complex that is probably involved in the transfer of the threonylcarbamoyl moiety of threonylcarbamoyl-AMP (TC-AMP) to the N6 group of A37. The Kae1 domain likely plays a direct catalytic role in this reaction. The Bud32 domain probably displays kinase activity that regulates Kae1 function. This is Probable bifunctional tRNA threonylcarbamoyladenosine biosynthesis protein from Thermoplasma volcanium (strain ATCC 51530 / DSM 4299 / JCM 9571 / NBRC 15438 / GSS1).